The primary structure comprises 360 residues: COP9 signalosome complex subunit 5 (360 aa).

An MPN domain is found at 60–197; it reads AKISALALLK…IGAFRTYPKD (138 aa). 3 residues coordinate Zn(2+): histidine 143, histidine 145, and aspartate 156. A JAMM motif motif is present at residues 143-156; it reads HSHPGYGCWLSGID. Disordered stretches follow at residues 293–315 and 341–360; these read LMPSQRKKEQEESPLAKVTRDSS and SNKASTSAPDSSGPEPMVEA. Residues 341-350 show a composition bias toward polar residues; sequence SNKASTSAPD.

It belongs to the peptidase M67A family. CSN5 subfamily. As to quaternary structure, component of the CSN complex, probably composed of CSN1, CSN2, CSN3, CSN4, CSN5, CSN6, CSN7 and CSN8. Interacts with MCM2.

Functionally, probable protease subunit of the COP9 signalosome complex (CSN), a complex involved in various cellular and developmental processes such as photomorphogenesis and response to hormones. The CSN complex is an essential regulator of the ubiquitin (Ubl) conjugation pathway by mediating the deneddylation of the cullin subunits of SCF-type E3 ligase complexes, leading to decrease the Ubl ligase activity of SCF. Involved in early response to iron deficiency. In Oryza sativa subsp. japonica (Rice), this protein is COP9 signalosome complex subunit 5.